The sequence spans 172 residues: Adenine phosphoribosyltransferase (172 aa).

This sequence belongs to the purine/pyrimidine phosphoribosyltransferase family. In terms of assembly, homodimer.

It localises to the cytoplasm. It carries out the reaction AMP + diphosphate = 5-phospho-alpha-D-ribose 1-diphosphate + adenine. It functions in the pathway purine metabolism; AMP biosynthesis via salvage pathway; AMP from adenine: step 1/1. Its function is as follows. Catalyzes a salvage reaction resulting in the formation of AMP, that is energically less costly than de novo synthesis. The protein is Adenine phosphoribosyltransferase of Streptococcus agalactiae serotype III (strain NEM316).